A 177-amino-acid chain; its full sequence is Putative HTH-type transcriptional regulator YvaV (177 aa).

Residues 49 to 73 constitute a DNA-binding region (H-T-H motif); that stretch reads LTELSEATGMSKTRMSQVVREMLDA.

This sequence belongs to the GbsR family.

The polypeptide is Putative HTH-type transcriptional regulator YvaV (yvaV) (Bacillus subtilis (strain 168)).